The primary structure comprises 97 residues: HssA/B-like protein 48 (97 aa).

Disordered regions lie at residues 1–20 (MTLF…SKSS) and 78–97 (GSGY…CCGI).

The protein belongs to the hssA/B family.

The protein is HssA/B-like protein 48 (hssl48) of Dictyostelium discoideum (Social amoeba).